We begin with the raw amino-acid sequence, 282 residues long: Homeobox protein vex1 (282 aa).

Residues A129–T188 constitute a DNA-binding region (homeobox).

The protein localises to the nucleus. Transcriptional repressor. Acts in a ventral signaling pathway downstream of bmp4 to antagonize the Spemann organizer and ventrally pattern the embryonic mesoderm. Represses transcription of the dorsal genes gsc and otx2. The polypeptide is Homeobox protein vex1 (Xenopus tropicalis (Western clawed frog)).